A 190-amino-acid polypeptide reads, in one-letter code: Cypemycin cysteine dehydrogenase (decarboxylating) (190 aa).

This sequence belongs to the HFCD (homooligomeric flavin containing Cys decarboxylase) superfamily.

The enzyme catalyses [cypemycin](1-18)-L-Cys-L-Leu-L-Val-L-Cys + A = C(3,19),S(21)-[cypemycin](1-18)-L-Ala-L-Leu-N-thioethenyl-L-valinamide + hydrogen sulfide + AH2 + CO2. Involved in the biosynthesis of the lanaridin cypemycin. The protein is Cypemycin cysteine dehydrogenase (decarboxylating) of Streptomyces sp.